The following is a 320-amino-acid chain: Malate dehydrogenase (320 aa).

NAD(+) is bound by residues 10-15 (GAGQIG) and D34. Residues R83 and R89 each coordinate substrate. NAD(+) contacts are provided by residues N96 and 119 to 121 (ITN). Substrate contacts are provided by N121 and R152. H176 functions as the Proton acceptor in the catalytic mechanism.

Belongs to the LDH/MDH superfamily. MDH type 3 family.

The enzyme catalyses (S)-malate + NAD(+) = oxaloacetate + NADH + H(+). In terms of biological role, catalyzes the reversible oxidation of malate to oxaloacetate. The polypeptide is Malate dehydrogenase (Methylobacterium nodulans (strain LMG 21967 / CNCM I-2342 / ORS 2060)).